Reading from the N-terminus, the 122-residue chain is Large ribosomal subunit protein uL14 (122 aa).

Belongs to the universal ribosomal protein uL14 family. Part of the 50S ribosomal subunit. Forms a cluster with proteins L3 and L19. In the 70S ribosome, L14 and L19 interact and together make contacts with the 16S rRNA in bridges B5 and B8.

Functionally, binds to 23S rRNA. Forms part of two intersubunit bridges in the 70S ribosome. The polypeptide is Large ribosomal subunit protein uL14 (Carboxydothermus hydrogenoformans (strain ATCC BAA-161 / DSM 6008 / Z-2901)).